A 753-amino-acid chain; its full sequence is 5-methyltetrahydropteroyltriglutamate--homocysteine methyltransferase (753 aa).

5-methyltetrahydropteroyltri-L-glutamate is bound by residues 17–20 (RELK) and Lys-117. L-homocysteine contacts are provided by residues 431-433 (IGS) and Glu-484. Residues 431 to 433 (IGS) and Glu-484 contribute to the L-methionine site. Residues 515 to 516 (RC) and Trp-561 contribute to the 5-methyltetrahydropteroyltri-L-glutamate site. Asp-599 serves as a coordination point for L-homocysteine. An L-methionine-binding site is contributed by Asp-599. Residue Glu-605 coordinates 5-methyltetrahydropteroyltri-L-glutamate. Zn(2+) contacts are provided by His-641, Cys-643, and Glu-665. The active-site Proton donor is the His-694. Cys-726 is a Zn(2+) binding site.

Belongs to the vitamin-B12 independent methionine synthase family. Requires Zn(2+) as cofactor.

The catalysed reaction is 5-methyltetrahydropteroyltri-L-glutamate + L-homocysteine = tetrahydropteroyltri-L-glutamate + L-methionine. The protein operates within amino-acid biosynthesis; L-methionine biosynthesis via de novo pathway; L-methionine from L-homocysteine (MetE route): step 1/1. Functionally, catalyzes the transfer of a methyl group from 5-methyltetrahydrofolate to homocysteine resulting in methionine formation. The sequence is that of 5-methyltetrahydropteroyltriglutamate--homocysteine methyltransferase from Cronobacter sakazakii (strain ATCC BAA-894) (Enterobacter sakazakii).